Here is a 335-residue protein sequence, read N- to C-terminus: Cell division protein ZipA (335 aa).

The Periplasmic portion of the chain corresponds to 1–4; it reads MDLN. A helical transmembrane segment spans residues 5 to 25; the sequence is AILIILGVIALIILVAHGIWS. Over 26–335 the chain is Cytoplasmic; that stretch reads NRCEKSQYFE…AERDYLARVS (310 aa).

Belongs to the ZipA family. Interacts with FtsZ via their C-terminal domains.

Its subcellular location is the cell inner membrane. Its function is as follows. Essential cell division protein that stabilizes the FtsZ protofilaments by cross-linking them and that serves as a cytoplasmic membrane anchor for the Z ring. Also required for the recruitment to the septal ring of downstream cell division proteins. The sequence is that of Cell division protein ZipA from Histophilus somni (strain 129Pt) (Haemophilus somnus).